A 448-amino-acid polypeptide reads, in one-letter code: Asparagine--tRNA ligase (448 aa).

This sequence belongs to the class-II aminoacyl-tRNA synthetase family. As to quaternary structure, homodimer.

Its subcellular location is the cytoplasm. It catalyses the reaction tRNA(Asn) + L-asparagine + ATP = L-asparaginyl-tRNA(Asn) + AMP + diphosphate + H(+). In Streptococcus thermophilus (strain ATCC BAA-491 / LMD-9), this protein is Asparagine--tRNA ligase.